The primary structure comprises 451 residues: Putative gluconeogenesis factor (451 aa).

This sequence belongs to the gluconeogenesis factor family.

It localises to the cytoplasm. Its function is as follows. Required for morphogenesis under gluconeogenic growth conditions. The protein is Putative gluconeogenesis factor of Clostridium acetobutylicum (strain ATCC 824 / DSM 792 / JCM 1419 / IAM 19013 / LMG 5710 / NBRC 13948 / NRRL B-527 / VKM B-1787 / 2291 / W).